Consider the following 305-residue polypeptide: Ribosomal protein L11 methyltransferase (305 aa).

4 residues coordinate S-adenosyl-L-methionine: Thr152, Gly173, Asp195, and Asn237.

Belongs to the methyltransferase superfamily. PrmA family.

It localises to the cytoplasm. It catalyses the reaction L-lysyl-[protein] + 3 S-adenosyl-L-methionine = N(6),N(6),N(6)-trimethyl-L-lysyl-[protein] + 3 S-adenosyl-L-homocysteine + 3 H(+). In terms of biological role, methylates ribosomal protein L11. The polypeptide is Ribosomal protein L11 methyltransferase (Hamiltonella defensa subsp. Acyrthosiphon pisum (strain 5AT)).